The primary structure comprises 442 residues: MIGYQIYVRSFRDGNFDGVGDFKGLKGAISYLKELGVDFVWLMPVFSSISFHGYDVVDFYSFKAEYGDEKDFREMIEAFHDNGIKVVLDLPIHHTGFLHTWFQKALKGDPHYRDYYVWASEKTDLDERREWDNERIWHPLEDGRFYRGLFGPLSPDLNYDNPQVFEEMKKVVYHLLEMGVDGFRFDAAKHMRDTLEQNVRFWRYFLSDIEGIFLAEIWAESKVVDEHGRIFGYMLNFDTSHCIKEAVWKENFKVLIESIERALVGKDYLPVNFTSNHDMSRLASFEGGLSEEKVKLSLSILFTLPGVPLIFYGDELGMKGIYRKPNTEVVLDPFPWSENISLEGQTFWKWPAYNSPFSGVSVEYQKKKRDSILLHIMKWTGFRKENHWLDRANIEFLCKEEKLLHVYRLVDEGRSLKVIHNLSNGEMVFEGVRVQPYSTEVI.

The Ca(2+) site is built by aspartate 13, asparagine 15, aspartate 17, valine 19, and aspartate 21. The Nucleophile role is filled by aspartate 186. Glutamate 216 serves as the catalytic Proton donor.

Belongs to the glycosyl hydrolase 13 family. As to quaternary structure, monomer. Ca(2+) serves as cofactor.

It is found in the cytoplasm. The catalysed reaction is Transfers a segment of a (1-&gt;4)-alpha-D-glucan to a new position in an acceptor, which may be glucose or a (1-&gt;4)-alpha-D-glucan.. Functionally, hydrolyzes the 1,4-alpha-glycoside bonds in oligomeric and polymeric 1,4-alpha-glucans and transfers oligosaccharides (maltotriose being the shortest one) to acceptor maltodextrins. The polypeptide is 4-alpha-glucanotransferase (mgtA) (Thermotoga neapolitana).